Consider the following 87-residue polypeptide: Toxin CsEv2 (87 aa).

The first 19 residues, 1–19, serve as a signal peptide directing secretion; that stretch reads MNSLLIITACLFLIGTVWA. One can recognise an LCN-type CS-alpha/beta domain in the interval 20–85; it reads KEGYLVNKST…TYPLPNKSCS (66 aa). Disulfide bonds link cysteine 31-cysteine 84, cysteine 35-cysteine 60, cysteine 44-cysteine 65, and cysteine 48-cysteine 67.

The protein belongs to the long (4 C-C) scorpion toxin superfamily. Sodium channel inhibitor family. Beta subfamily. As to expression, expressed by the venom gland.

Its subcellular location is the secreted. Functionally, beta toxins bind voltage-independently at site-4 of sodium channels (Nav) and shift the voltage of activation toward more negative potentials thereby affecting sodium channel activation and promoting spontaneous and repetitive firing. Induces immediate paralysis in crickets after injection, with a total paralysis occurring within 15-30 minutes and lasting for 1-2 hours. Is also lethal to vertebrate (chicks) when injected in very high dosages (more that 100 mg/kg). The protein is Toxin CsEv2 of Centruroides sculpturatus (Arizona bark scorpion).